We begin with the raw amino-acid sequence, 568 residues long: Potassium-transporting ATPase potassium-binding subunit (568 aa).

12 consecutive transmembrane segments (helical) span residues 7–27 (LLITSFLLILMLLAKPLGNII), 67–87 (YALAITIFNLTGLLLLFTLLV), 137–157 (GLTVQNFLSAATGIAVAFALI), 180–200 (LYLLLPLSMVIALVFVSQGVI), 258–278 (FIQILSIFLIPCALCFAFGQV), 288–308 (LLWAMSIIFVIATVGVMYAEL), 332–352 (FGILATSIYAVVTTAASCGAV), 361–381 (ALGGMIPMWLIQIGEVVFGGV), 384–404 (GLYGMLLFVLLTVFIAGLMIG), 421–441 (MVALAILVTPTLALLGTALTI), 488–508 (LLLAIILFLGRFGMILPVLAI), and 535–555 (LLILTIMLIGALTFIPALILG).

The protein belongs to the KdpA family. As to quaternary structure, the system is composed of three essential subunits: KdpA, KdpB and KdpC.

It is found in the cell inner membrane. In terms of biological role, part of the high-affinity ATP-driven potassium transport (or Kdp) system, which catalyzes the hydrolysis of ATP coupled with the electrogenic transport of potassium into the cytoplasm. This subunit binds the periplasmic potassium ions and delivers the ions to the membrane domain of KdpB through an intramembrane tunnel. This Photorhabdus laumondii subsp. laumondii (strain DSM 15139 / CIP 105565 / TT01) (Photorhabdus luminescens subsp. laumondii) protein is Potassium-transporting ATPase potassium-binding subunit.